A 179-amino-acid polypeptide reads, in one-letter code: Alkyl hydroperoxide reductase AhpD (179 aa).

The active-site Proton donor is Cys-130. Cys-130 and Cys-133 are joined by a disulfide. The Cysteine sulfenic acid (-SOH) intermediate role is filled by Cys-133.

Belongs to the AhpD family. Homotrimer.

The enzyme catalyses N(6)-[(R)-dihydrolipoyl]-L-lysyl-[lipoyl-carrier protein] + a hydroperoxide = N(6)-[(R)-lipoyl]-L-lysyl-[lipoyl-carrier protein] + an alcohol + H2O. Functionally, antioxidant protein with alkyl hydroperoxidase activity. Required for the reduction of the AhpC active site cysteine residues and for the regeneration of the AhpC enzyme activity. This is Alkyl hydroperoxide reductase AhpD from Rhodococcus erythropolis (strain PR4 / NBRC 100887).